The following is a 330-amino-acid chain: Trans-1,2-dihydrobenzene-1,2-diol dehydrogenase (330 aa).

It belongs to the Gfo/Idh/MocA family. As to quaternary structure, homodimer.

The enzyme catalyses (1R,2R)-1,2-dihydrobenzene-1,2-diol + NADP(+) = catechol + NADPH + H(+). The catalysed reaction is D-xylose + NADP(+) = D-xylono-1,5-lactone + NADPH + H(+). The protein is Trans-1,2-dihydrobenzene-1,2-diol dehydrogenase (dhdh) of Xenopus tropicalis (Western clawed frog).